Reading from the N-terminus, the 56-residue chain is Arcadin-3 (56 aa).

The protein resides in the cytoplasm. It localises to the cytoskeleton. Functionally, part of an actin-like archaeal cytoskeleton. The chain is Arcadin-3 from Pyrobaculum calidifontis (strain DSM 21063 / JCM 11548 / VA1).